The following is a 304-amino-acid chain: D-tagatose-1-phosphate kinase (304 aa).

The active-site Proton acceptor is the Asp-250.

This sequence belongs to the carbohydrate kinase PfkB family. Requires Mg(2+) as cofactor.

It catalyses the reaction alpha-D-tagatopyranose 1-phosphate + ATP = D-tagatofuranose 1,6-bisphosphate + ADP + H(+). Its pathway is carbohydrate degradation. With respect to regulation, activity is inhibited by tagatose-6-phosphate and fructose-6-phosphate. In terms of biological role, kinase involved in a D-tagatose catabolic pathway. Catalyzes the phosphorylation of D-tagatose-1-phosphate (Tag-1P) to D-tagatose-1,6-bisphosphate. Can also use D-fructose-1-phosphate, with 40-fold lower catalytic efficiency, but not tagatose-6-phosphate or fructose-6-phosphate. The substrate, which occurs in a pyranose form in solution, may undergo a change to the furanose conformation after binding to the enzyme, in order to permit phosphorylation at C-6. The sequence is that of D-tagatose-1-phosphate kinase from Bacillus licheniformis (strain ATCC 14580 / DSM 13 / JCM 2505 / CCUG 7422 / NBRC 12200 / NCIMB 9375 / NCTC 10341 / NRRL NRS-1264 / Gibson 46).